Consider the following 467-residue polypeptide: NALCN channel auxiliary factor 1 (467 aa).

Residues 40–60 traverse the membrane as a helical segment; it reads LSLASLLFFTVLLSDHLWFCA. Positions 121–161 are disordered; that stretch reads MGESSPAAQAHRLLSASSSPTLPPSPGGGGGSKGNRGKNNR. N-linked (GlcNAc...) asparagine glycans are attached at residues Asn160, Asn226, and Asn254. Intrachain disulfides connect Cys200-Cys270, Cys235-Cys322, Cys255-Cys270, Cys313-Cys350, Cys333-Cys386, Cys339-Cys385, and Cys343-Cys370. Residues 390-408 are compositionally biased toward basic and acidic residues; it reads SEEQTAPRPKGTVDRRDSC. The segment at 390–409 is disordered; that stretch reads SEEQTAPRPKGTVDRRDSCP. A helical transmembrane segment spans residues 426–446; it reads LKLCVLVLILLHTVLTASAAQ. N-linked (GlcNAc...) asparagine glycosylation occurs at Asn462.

This sequence belongs to the NALF family. Component of the NALCN channel complex. NALCN complex consists of NALCN and auxiliary subunits, UNC79, UNC80 and NACL1. These auxiliary subunits are essential for the NALCN channel function.

The protein localises to the cell membrane. In terms of biological role, auxillary component of the NALCN sodium channel complex, a channel that regulates the resting membrane potential and controls neuronal excitability. The polypeptide is NALCN channel auxiliary factor 1 (Mus musculus (Mouse)).